We begin with the raw amino-acid sequence, 179 residues long: Cell division protein ZapC (179 aa).

This sequence belongs to the ZapC family. As to quaternary structure, interacts directly with FtsZ.

The protein resides in the cytoplasm. In terms of biological role, contributes to the efficiency of the cell division process by stabilizing the polymeric form of the cell division protein FtsZ. Acts by promoting interactions between FtsZ protofilaments and suppressing the GTPase activity of FtsZ. This is Cell division protein ZapC from Photobacterium profundum (strain SS9).